The primary structure comprises 1076 residues: Bifunctional glutamine synthetase adenylyltransferase/adenylyl-removing enzyme (1076 aa).

An adenylyl removase region spans residues 1–521; it reads MESSIFKPSS…LHLDIYYRPM (521 aa). The segment at 524–1076 is adenylyl transferase; that stretch reads VNAQMENDQI…LERNRRRAQR (553 aa). A compositionally biased stretch (low complexity) spans 1042-1056; sequence TATASAATQQPQTAP. A disordered region spans residues 1042–1076; sequence TATASAATQQPQTAPRPRMHVIAPRLERNRRRAQR.

The protein belongs to the GlnE family. Mg(2+) is required as a cofactor.

It carries out the reaction [glutamine synthetase]-O(4)-(5'-adenylyl)-L-tyrosine + phosphate = [glutamine synthetase]-L-tyrosine + ADP. The enzyme catalyses [glutamine synthetase]-L-tyrosine + ATP = [glutamine synthetase]-O(4)-(5'-adenylyl)-L-tyrosine + diphosphate. In terms of biological role, involved in the regulation of glutamine synthetase GlnA, a key enzyme in the process to assimilate ammonia. When cellular nitrogen levels are high, the C-terminal adenylyl transferase (AT) inactivates GlnA by covalent transfer of an adenylyl group from ATP to specific tyrosine residue of GlnA, thus reducing its activity. Conversely, when nitrogen levels are low, the N-terminal adenylyl removase (AR) activates GlnA by removing the adenylyl group by phosphorolysis, increasing its activity. The regulatory region of GlnE binds the signal transduction protein PII (GlnB) which indicates the nitrogen status of the cell. This is Bifunctional glutamine synthetase adenylyltransferase/adenylyl-removing enzyme from Bifidobacterium longum (strain NCC 2705).